The chain runs to 290 residues: Arylamine N-acetyltransferase 1 (290 aa).

An N-acetylmethionine modification is found at M1. The Acyl-thioester intermediate role is filled by C68. A CoA-binding site is contributed by S103. A substrate-binding site is contributed by 106–107 (IH). Catalysis depends on residues H107 and D122. Residues Y208 and S287 each coordinate CoA.

The protein belongs to the arylamine N-acetyltransferase family.

The protein localises to the cytoplasm. It carries out the reaction an arylamine + acetyl-CoA = an N-acetylarylamine + CoA. Functionally, participates in the detoxification of a plethora of hydrazine and arylamine drugs. The polypeptide is Arylamine N-acetyltransferase 1 (NAT1) (Mesocricetus auratus (Golden hamster)).